We begin with the raw amino-acid sequence, 397 residues long: Tryptophan synthase beta chain (397 aa).

Position 86 is an N6-(pyridoxal phosphate)lysine (lysine 86).

Belongs to the TrpB family. In terms of assembly, tetramer of two alpha and two beta chains. Requires pyridoxal 5'-phosphate as cofactor.

It carries out the reaction (1S,2R)-1-C-(indol-3-yl)glycerol 3-phosphate + L-serine = D-glyceraldehyde 3-phosphate + L-tryptophan + H2O. It functions in the pathway amino-acid biosynthesis; L-tryptophan biosynthesis; L-tryptophan from chorismate: step 5/5. Its function is as follows. The beta subunit is responsible for the synthesis of L-tryptophan from indole and L-serine. This is Tryptophan synthase beta chain from Aeromonas salmonicida (strain A449).